Here is a 363-residue protein sequence, read N- to C-terminus: MKLDLYIDKDGQKLRCGYTTGSCAAAAAKAAALILGGETMTSVKIDTPAGLVLDLPVEHCRSYKNKDGTAIGEAAVQKDAGDDPDSTDGIYIYARVSYRNDGKVLIDGGEGIGRITKKGLFGEVGEAAINPVPRQMIEKEVLKVSKKGFNVEIFSPQGAEIGKKTFNKNIGVEGGISIIGTKGIVYPMSEDAIKKTIYLEIDGILQNSEKKEILLVPGNYGEGLKEKLNTIIDLPTVKISNYIGDSLSYAYSKGFKTMTLLGHIGKFAKLSIGIFNTHNRTADTRMEAFVYYLAMHGADKKTIETVNAFLTAEEAFNYLVENKIEMILKAMERGAEERIKKYLKDDSLSIRVLIYSMKYGLIE.

It belongs to the CbiD family.

It catalyses the reaction Co-precorrin-5B + S-adenosyl-L-methionine = Co-precorrin-6A + S-adenosyl-L-homocysteine. It functions in the pathway cofactor biosynthesis; adenosylcobalamin biosynthesis; cob(II)yrinate a,c-diamide from sirohydrochlorin (anaerobic route): step 6/10. Functionally, catalyzes the methylation of C-1 in cobalt-precorrin-5B to form cobalt-precorrin-6A. In Treponema denticola (strain ATCC 35405 / DSM 14222 / CIP 103919 / JCM 8153 / KCTC 15104), this protein is Cobalt-precorrin-5B C(1)-methyltransferase.